The sequence spans 342 residues: N-alpha-acetyl-L-2,4-diaminobutyric acid deacetylase (342 aa).

A disordered region spans residues 103–124 (TAGRRTSPMDGGNLNRSFPGDP).

Belongs to the DoeB deacetylase family. It depends on Zn(2+) as a cofactor.

The protein resides in the cytoplasm. The catalysed reaction is (2S)-2-acetamido-4-aminobutanoate + H2O = L-2,4-diaminobutanoate + acetate. In terms of biological role, involved in the degradation of ectoine, which allows H.elongata to utilize ectoine as both a carbon and a nitrogen source for growth. Catalyzes the deacetylation of N-alpha-acetyl-L-2,4-diaminobutyrate (N-alpha-Ac-DABA) to yield L-2,4-diaminobutyrate (DABA). The sequence is that of N-alpha-acetyl-L-2,4-diaminobutyric acid deacetylase from Halomonas elongata (strain ATCC 33173 / DSM 2581 / NBRC 15536 / NCIMB 2198 / 1H9).